We begin with the raw amino-acid sequence, 380 residues long: Tryptophan 2,3-dioxygenase (380 aa).

Substrate is bound by residues 57–61 (FIITH) and Arg128. Residue His313 coordinates heme. Substrate is bound at residue Thr328.

This sequence belongs to the tryptophan 2,3-dioxygenase family. Homotetramer. Dimer of dimers. Requires heme as cofactor.

The catalysed reaction is L-tryptophan + O2 = N-formyl-L-kynurenine. Its pathway is amino-acid degradation; L-tryptophan degradation via kynurenine pathway; L-kynurenine from L-tryptophan: step 1/2. It participates in pigment biosynthesis; ommochrome biosynthesis. In terms of biological role, heme-dependent dioxygenase that catalyzes the oxidative cleavage of the L-tryptophan (L-Trp) pyrrole ring and converts L-tryptophan to N-formyl-L-kynurenine. Catalyzes the oxidative cleavage of the indole moiety. The polypeptide is Tryptophan 2,3-dioxygenase (Drosophila ananassae (Fruit fly)).